A 197-amino-acid chain; its full sequence is 3-isopropylmalate dehydratase small subunit (197 aa).

The protein belongs to the LeuD family. LeuD type 1 subfamily. In terms of assembly, heterodimer of LeuC and LeuD.

It catalyses the reaction (2R,3S)-3-isopropylmalate = (2S)-2-isopropylmalate. It functions in the pathway amino-acid biosynthesis; L-leucine biosynthesis; L-leucine from 3-methyl-2-oxobutanoate: step 2/4. Catalyzes the isomerization between 2-isopropylmalate and 3-isopropylmalate, via the formation of 2-isopropylmaleate. The protein is 3-isopropylmalate dehydratase small subunit of Mycobacterium sp. (strain JLS).